A 61-amino-acid polypeptide reads, in one-letter code: Small ribosomal subunit protein uS14B (61 aa).

The Zn(2+) site is built by Cys24, Cys27, Cys40, and Cys43.

Belongs to the universal ribosomal protein uS14 family. Zinc-binding uS14 subfamily. As to quaternary structure, part of the 30S ribosomal subunit. Contacts proteins S3 and S10. The cofactor is Zn(2+).

Binds 16S rRNA, required for the assembly of 30S particles and may also be responsible for determining the conformation of the 16S rRNA at the A site. The polypeptide is Small ribosomal subunit protein uS14B (Oceanobacillus iheyensis (strain DSM 14371 / CIP 107618 / JCM 11309 / KCTC 3954 / HTE831)).